The primary structure comprises 176 residues: Retinol-binding protein 4-A (176 aa).

Serine 1 carries the post-translational modification N-acetylserine. Disulfide bonds link cysteine 3–cysteine 159, cysteine 69–cysteine 173, and cysteine 119–cysteine 128. Glutamine 97 serves as a coordination point for substrate.

The protein belongs to the calycin superfamily. Lipocalin family.

The protein resides in the secreted. RBP delivers retinol from the liver stores to the peripheral tissues. In plasma, the RBP-retinol complex interacts with transthyretin, this prevents its loss by filtration through the kidney glomeruli. The protein is Retinol-binding protein 4-A (rbp4a) of Oncorhynchus mykiss (Rainbow trout).